Here is a 290-residue protein sequence, read N- to C-terminus: Arylamine N-acetyltransferase 1 (290 aa).

Met-1 bears the N-acetylmethionine mark. Cys-68 functions as the Acyl-thioester intermediate in the catalytic mechanism. Residues Thr-103 and Gly-104 each coordinate CoA. Position 106–107 (106–107 (IH)) interacts with substrate. Active-site residues include His-107 and Asp-122. CoA-binding residues include Tyr-208 and Ser-214.

Belongs to the arylamine N-acetyltransferase family.

It is found in the cytoplasm. It catalyses the reaction an arylamine + acetyl-CoA = an N-acetylarylamine + CoA. The polypeptide is Arylamine N-acetyltransferase 1 (NAT1) (Oryctolagus cuniculus (Rabbit)).